Consider the following 202-residue polypeptide: Holliday junction branch migration complex subunit RuvA (202 aa).

The domain I stretch occupies residues 1–63 (MIASLRGTVL…EDSMTLYGFT (63 aa)). The interval 64–142 (SQDDRDMFHV…AFAPAESADL (79 aa)) is domain II. The segment at 143 to 148 (SSAAPA) is flexible linker. A domain III region spans residues 149–202 (AAGPVVEDVVEALIGLGFTDKMARPVVESVVAEQPDAATPVVLRAALSQLGAKK).

This sequence belongs to the RuvA family. Homotetramer. Forms an RuvA(8)-RuvB(12)-Holliday junction (HJ) complex. HJ DNA is sandwiched between 2 RuvA tetramers; dsDNA enters through RuvA and exits via RuvB. An RuvB hexamer assembles on each DNA strand where it exits the tetramer. Each RuvB hexamer is contacted by two RuvA subunits (via domain III) on 2 adjacent RuvB subunits; this complex drives branch migration. In the full resolvosome a probable DNA-RuvA(4)-RuvB(12)-RuvC(2) complex forms which resolves the HJ.

It is found in the cytoplasm. The RuvA-RuvB-RuvC complex processes Holliday junction (HJ) DNA during genetic recombination and DNA repair, while the RuvA-RuvB complex plays an important role in the rescue of blocked DNA replication forks via replication fork reversal (RFR). RuvA specifically binds to HJ cruciform DNA, conferring on it an open structure. The RuvB hexamer acts as an ATP-dependent pump, pulling dsDNA into and through the RuvAB complex. HJ branch migration allows RuvC to scan DNA until it finds its consensus sequence, where it cleaves and resolves the cruciform DNA. This chain is Holliday junction branch migration complex subunit RuvA, found in Corynebacterium aurimucosum (strain ATCC 700975 / DSM 44827 / CIP 107346 / CN-1) (Corynebacterium nigricans).